A 544-amino-acid polypeptide reads, in one-letter code: Prolyl 4-hydroxylase subunit alpha-3 (544 aa).

A signal peptide spans 1-19; it reads MGPGARLAALLAVLALGTG. Residues 107–131 are a coiled coil; it reads LEASENIRALKDGYEKVEQDLPAFE. The TPR repeat unit spans residues 227 to 260; it reads EDALDHLAFAYFRAGNVSCALSLSREFLLYSPDN. An N-linked (GlcNAc...) asparagine glycan is attached at Asn-242. In terms of domain architecture, Fe2OG dioxygenase spans 422 to 529; the sequence is YAEYLQVVNY…KWVANKWIHE (108 aa). Fe cation-binding residues include His-440 and Asp-442. N-linked (GlcNAc...) asparagine glycosylation is present at Asn-482. Fe cation is bound at residue His-510. Residue Lys-520 participates in 2-oxoglutarate binding.

The protein belongs to the P4HA family. Heterotetramer of two alpha-3 chains and two beta chains (the beta chain is the multi-functional PDI). Fe(2+) serves as cofactor. The cofactor is L-ascorbate. Post-translationally, N-glycosylation plays no role in the catalytic activity. In terms of tissue distribution, highly expressed in placenta, liver and fetal skin. Weakly expressed in fetal epiphyseal cartilage, fetal liver, fibroblast, lung and skeletal muscle. Expressed also in fibrous cap of carotid atherosclerotic lesions.

It is found in the endoplasmic reticulum lumen. The catalysed reaction is L-prolyl-[collagen] + 2-oxoglutarate + O2 = trans-4-hydroxy-L-prolyl-[collagen] + succinate + CO2. In terms of biological role, catalyzes the post-translational formation of 4-hydroxyproline in -Xaa-Pro-Gly- sequences in collagens and other proteins. The sequence is that of Prolyl 4-hydroxylase subunit alpha-3 (P4HA3) from Homo sapiens (Human).